We begin with the raw amino-acid sequence, 999 residues long: Receptor-like protein kinase 5 (999 aa).

Positions 1–14 (MLYCLILLLCLSST) are cleaved as a signal peptide. Over 15-621 (YLPSLSLNQD…LCRKITRSKN (607 aa)) the chain is Extracellular. LRR repeat units follow at residues 90 to 112 (SLHS…DFDT), 115 to 137 (NLIS…LPFN), 140 to 161 (NLKF…SFGE), 164 to 186 (KLES…LGNV), and 188 to 208 (TLKE…PSQL). 2 N-linked (GlcNAc...) asparagine glycosylation sites follow: asparagine 98 and asparagine 102. N-linked (GlcNAc...) asparagine glycans are attached at residues asparagine 150 and asparagine 185. An N-linked (GlcNAc...) asparagine glycan is attached at asparagine 210. 2 LRR repeats span residues 213-236 (ELQV…SRLT) and 237-259 (SLVN…ITQL). Residues asparagine 269 and asparagine 282 are each glycosylated (N-linked (GlcNAc...) asparagine). LRR repeat units follow at residues 285 to 307 (TLKR…LNLL), 308 to 330 (NLES…ITRS), 332 to 353 (TLSE…QLGA), 356 to 378 (PLQY…VCGE), 380 to 402 (KLEY…LGKC), 404 to 427 (SLTR…WGLP), 428 to 450 (RLSL…IIGA), 452 to 474 (NLSN…IGSL), 500 to 523 (QLSR…RGWK), 524 to 546 (NLNE…VGIL), 548 to 569 (VLNY…ELQN), and 571 to 593 (KLNV…YANK). Residue asparagine 452 is glycosylated (N-linked (GlcNAc...) asparagine). N-linked (GlcNAc...) asparagine glycosylation occurs at asparagine 576. A helical transmembrane segment spans residues 622–641 (IGYVWILLTIFLLAGLVFVV). Residues 642 to 999 (GIVMFIAKCR…PYYTEDLNSV (358 aa)) lie on the Cytoplasmic side of the membrane. The 286-residue stretch at 683 to 968 (LDEKNVIGFG…KVVIMLQEVS (286 aa)) folds into the Protein kinase domain. ATP-binding positions include 689 to 697 (IGFGSSGKV) and lysine 711. 2 positions are modified to phosphotyrosine: tyrosine 766 and tyrosine 806. Aspartate 819 serves as the catalytic Proton acceptor. Serine 856 is subject to Phosphoserine. Phosphotyrosine occurs at positions 864 and 871. Phosphothreonine is present on threonine 872. The disordered stretch occupies residues 972 to 999 (PCSSPNTSKRSKTGGKLSPYYTEDLNSV).

It belongs to the protein kinase superfamily. Ser/Thr protein kinase family. Interacts with CST. Binds to IDA. Mg(2+) serves as cofactor. It depends on Mn(2+) as a cofactor. Autophosphorylated on Ser, Thr and Tyr residues. As to expression, expressed in roots and rosettes. Expressed at the base of petioles and pedicels, and in the abscission zones of the floral organs.

The protein localises to the cell membrane. It carries out the reaction L-seryl-[protein] + ATP = O-phospho-L-seryl-[protein] + ADP + H(+). It catalyses the reaction L-threonyl-[protein] + ATP = O-phospho-L-threonyl-[protein] + ADP + H(+). The enzyme catalyses L-tyrosyl-[protein] + ATP = O-phospho-L-tyrosyl-[protein] + ADP + H(+). Its function is as follows. Receptor with a dual specificity kinase activity acting on both serine/threonine- and tyrosine-containing substrates that controls floral organ abscission. May interact with the 'INFLORESCENCE DEFICIENT IN ABSCISSION' (IDA) ligands family. The chain is Receptor-like protein kinase 5 (RLK5) from Arabidopsis thaliana (Mouse-ear cress).